Reading from the N-terminus, the 442-residue chain is Urokinase-type plasminogen activator (442 aa).

Positions 1-20 (MRVLRACLSLCVLVVSDSKG) are cleaved as a signal peptide. In terms of domain architecture, EGF-like spans 29–65 (GASNCGCLNGGKCVSYKYFSNIQRCSCPKKFQGEHCE). 12 disulfides stabilise this stretch: Cys-33/Cys-41, Cys-35/Cys-53, Cys-55/Cys-64, Cys-72/Cys-153, Cys-93/Cys-135, Cys-124/Cys-148, Cys-179/Cys-310, Cys-220/Cys-236, Cys-228/Cys-299, Cys-324/Cys-393, Cys-356/Cys-372, and Cys-383/Cys-411. The tract at residues 36–59 (LNGGKCVSYKYFSNIQRCSCPKKF) is binds urokinase plasminogen activator surface receptor. The Kringle domain maps to 72–153 (CFEGNGHSYR…LVQECMVPNC (82 aa)). The N-linked (GlcNAc...) asparagine glycan is linked to Asn-152. The segment at 154–189 (SGGESHRPAYDGKNPFSTPEKVEFQCGQKALRPRFK) is connecting peptide. The Peptidase S1 domain maps to 190–435 (IVGGKSTTIE…FLTWIHTHVG (246 aa)). Residues His-235 and Asp-286 each act as charge relay system in the active site. Residue Ser-387 is the Charge relay system of the active site.

The protein belongs to the peptidase S1 family. In terms of assembly, found in high and low molecular mass forms. Each consists of two chains, A and B. The high molecular mass form contains a long chain A which is cleaved to yield a short chain A. Forms heterodimer with SERPINA5. Binds LRP1B; binding is followed by internalization and degradation. Interacts with MRC2. Interacts with PLAUR. In complex with SERPINE1, interacts with PLAUR/uPAR. Interacts with SORL1 and LRP1, either alone or in complex with SERPINE1; these interactions are abolished in the presence of LRPAP1/RAP. The ternary complex composed of PLAUR-PLAU-PAI1 also interacts with SORLA. Produced as an inactive single-chain protein (pro-uPA or sc-uPA), is processed into the active disulfide-linked two-chain form of PLAU/uPA by a proteolytic event mediated, at least, by TMPRSS4.

It is found in the secreted. The enzyme catalyses Specific cleavage of Arg-|-Val bond in plasminogen to form plasmin.. Its activity is regulated as follows. Inhibited by SERPINA5. Inhibited by SERPINE1. In terms of biological role, specifically cleaves the zymogen plasminogen to form the active enzyme plasmin. This chain is Urokinase-type plasminogen activator (PLAU), found in Sus scrofa (Pig).